The chain runs to 185 residues: Peptidyl-tRNA hydrolase (185 aa).

Y14 is a tRNA binding site. H19 functions as the Proton acceptor in the catalytic mechanism. The tRNA site is built by Y65, N67, and N113.

Belongs to the PTH family. In terms of assembly, monomer.

It is found in the cytoplasm. The enzyme catalyses an N-acyl-L-alpha-aminoacyl-tRNA + H2O = an N-acyl-L-amino acid + a tRNA + H(+). Hydrolyzes ribosome-free peptidyl-tRNAs (with 1 or more amino acids incorporated), which drop off the ribosome during protein synthesis, or as a result of ribosome stalling. In terms of biological role, catalyzes the release of premature peptidyl moieties from peptidyl-tRNA molecules trapped in stalled 50S ribosomal subunits, and thus maintains levels of free tRNAs and 50S ribosomes. The polypeptide is Peptidyl-tRNA hydrolase (Rickettsia prowazekii (strain Madrid E)).